Reading from the N-terminus, the 563-residue chain is Sulfite reductase [NADPH] hemoprotein beta-component (563 aa).

The [4Fe-4S] cluster site is built by C427, C433, C472, and C476. C476 contributes to the siroheme binding site.

Belongs to the nitrite and sulfite reductase 4Fe-4S domain family. As to quaternary structure, alpha(8)-beta(8). The alpha component is a flavoprotein, the beta component is a hemoprotein. The cofactor is siroheme. Requires [4Fe-4S] cluster as cofactor.

The catalysed reaction is hydrogen sulfide + 3 NADP(+) + 3 H2O = sulfite + 3 NADPH + 4 H(+). It functions in the pathway sulfur metabolism; hydrogen sulfide biosynthesis; hydrogen sulfide from sulfite (NADPH route): step 1/1. Its function is as follows. Component of the sulfite reductase complex that catalyzes the 6-electron reduction of sulfite to sulfide. This is one of several activities required for the biosynthesis of L-cysteine from sulfate. This is Sulfite reductase [NADPH] hemoprotein beta-component from Shewanella frigidimarina (strain NCIMB 400).